The chain runs to 159 residues: 6,7-dimethyl-8-ribityllumazine synthase (159 aa).

5-amino-6-(D-ribitylamino)uracil-binding positions include Trp26, 57-59 (ALE), and 79-81 (CVI). Residue 84–85 (GT) participates in (2S)-2-hydroxy-3-oxobutyl phosphate binding. The Proton donor role is filled by His87. Residue Asn112 participates in 5-amino-6-(D-ribitylamino)uracil binding. Arg126 contacts (2S)-2-hydroxy-3-oxobutyl phosphate.

It belongs to the DMRL synthase family.

It carries out the reaction (2S)-2-hydroxy-3-oxobutyl phosphate + 5-amino-6-(D-ribitylamino)uracil = 6,7-dimethyl-8-(1-D-ribityl)lumazine + phosphate + 2 H2O + H(+). It functions in the pathway cofactor biosynthesis; riboflavin biosynthesis; riboflavin from 2-hydroxy-3-oxobutyl phosphate and 5-amino-6-(D-ribitylamino)uracil: step 1/2. In terms of biological role, catalyzes the formation of 6,7-dimethyl-8-ribityllumazine by condensation of 5-amino-6-(D-ribitylamino)uracil with 3,4-dihydroxy-2-butanone 4-phosphate. This is the penultimate step in the biosynthesis of riboflavin. In Corynebacterium efficiens (strain DSM 44549 / YS-314 / AJ 12310 / JCM 11189 / NBRC 100395), this protein is 6,7-dimethyl-8-ribityllumazine synthase.